A 280-amino-acid polypeptide reads, in one-letter code: Formyltetrahydrofolate deformylase (280 aa).

Residues 8–86 form the ACT domain; sequence VLRTICPDQK…RELNPAGRRR (79 aa). Asp225 is a catalytic residue.

The protein belongs to the PurU family. In terms of assembly, homohexamer.

The catalysed reaction is (6R)-10-formyltetrahydrofolate + H2O = (6S)-5,6,7,8-tetrahydrofolate + formate + H(+). Its pathway is purine metabolism; IMP biosynthesis via de novo pathway; formate from 10-formyl-5,6,7,8-tetrahydrofolate: step 1/1. Its activity is regulated as follows. Activated by methionine, inhibited by glycine. Functionally, catalyzes the hydrolysis of 10-formyltetrahydrofolate (formyl-FH4) to formate and tetrahydrofolate (FH4). Provides the major source of formate for the PurT-dependent synthesis of 5'-phosphoribosyl-N-formylglycinamide (FGAR) during aerobic growth. Has a role in regulating the one-carbon pool. The polypeptide is Formyltetrahydrofolate deformylase (Escherichia coli (strain K12)).